The following is a 112-amino-acid chain: UPF0060 membrane protein Arth_4238 (112 aa).

A run of 4 helical transmembrane segments spans residues isoleucine 7 to alanine 27, glutamate 33 to leucine 53, isoleucine 62 to aspartate 82, and arginine 88 to proline 108.

Belongs to the UPF0060 family.

The protein localises to the cell membrane. The protein is UPF0060 membrane protein Arth_4238 of Arthrobacter sp. (strain FB24).